Reading from the N-terminus, the 702-residue chain is Phosphoglycerol transferase I (702 aa).

Helical transmembrane passes span 3-25 (WILALSLLLLLLLLVASPRLAWL), 73-95 (GYIAVFIGMVLLSLSPLVLLRVR), and 102-124 (GGGAVFGAFVVMLLVSVAVSPLY).

Belongs to the OpgB family.

It is found in the cell inner membrane. It carries out the reaction a phosphatidylglycerol + a membrane-derived-oligosaccharide D-glucose = a 1,2-diacyl-sn-glycerol + a membrane-derived-oligosaccharide 6-(glycerophospho)-D-glucose.. The protein operates within glycan metabolism; osmoregulated periplasmic glucan (OPG) biosynthesis. Transfers a phosphoglycerol residue from phosphatidylglycerol to the membrane-bound nascent glucan backbones. In Xanthomonas campestris pv. campestris (strain ATCC 33913 / DSM 3586 / NCPPB 528 / LMG 568 / P 25), this protein is Phosphoglycerol transferase I.